A 299-amino-acid polypeptide reads, in one-letter code: Putative fructokinase (299 aa).

ATP is bound at residue threonine 130. 4 residues coordinate Zn(2+): histidine 153, cysteine 168, histidine 171, and cysteine 174. Residues proline 182 and 230–234 each bind ATP; that span reads GVMQQ.

This sequence belongs to the ROK (NagC/XylR) family. It depends on Mg(2+) as a cofactor.

It carries out the reaction D-fructose + ATP = D-fructose 6-phosphate + ADP + H(+). Its activity is regulated as follows. Inhibited by zinc ions. Its function is as follows. Seems to be involved in the degradation of glucomannan. The polypeptide is Putative fructokinase (gmuE) (Bacillus subtilis (strain 168)).